We begin with the raw amino-acid sequence, 403 residues long: Argininosuccinate synthase (403 aa).

Residues 13–21 (AYSGGLDTS) and alanine 40 contribute to the ATP site. Residues tyrosine 92 and serine 97 each coordinate L-citrulline. Glycine 122 contacts ATP. Positions 124, 128, and 129 each coordinate L-aspartate. Asparagine 128 serves as a coordination point for L-citrulline. Arginine 132, serine 181, serine 190, glutamate 266, and tyrosine 278 together coordinate L-citrulline.

The protein belongs to the argininosuccinate synthase family. Type 1 subfamily. Homotetramer.

The protein localises to the cytoplasm. It carries out the reaction L-citrulline + L-aspartate + ATP = 2-(N(omega)-L-arginino)succinate + AMP + diphosphate + H(+). It participates in amino-acid biosynthesis; L-arginine biosynthesis; L-arginine from L-ornithine and carbamoyl phosphate: step 2/3. The protein is Argininosuccinate synthase of Aliivibrio fischeri (strain ATCC 700601 / ES114) (Vibrio fischeri).